The chain runs to 71 residues: Exodeoxyribonuclease 7 small subunit (71 aa).

This sequence belongs to the XseB family. As to quaternary structure, heterooligomer composed of large and small subunits.

The protein localises to the cytoplasm. It catalyses the reaction Exonucleolytic cleavage in either 5'- to 3'- or 3'- to 5'-direction to yield nucleoside 5'-phosphates.. In terms of biological role, bidirectionally degrades single-stranded DNA into large acid-insoluble oligonucleotides, which are then degraded further into small acid-soluble oligonucleotides. This chain is Exodeoxyribonuclease 7 small subunit, found in Clostridium botulinum (strain 657 / Type Ba4).